Consider the following 1657-residue polypeptide: Endoribonuclease Dicer homolog 4 (1657 aa).

Residues 1 to 14 are compositionally biased toward low complexity; sequence MGDAAAAAPAAAAA. The interval 1-26 is disordered; the sequence is MGDAAAAAPAAAAAGPSSTRGEPKDP. The 178-residue stretch at 37-214 folds into the Helicase ATP-binding domain; it reads LCKRAVEENI…SHSFTEKGGR (178 aa). An ATP-binding site is contributed by 50-57; sequence LGTGCGKT. Residues 157-160 carry the DECH box motif; that stretch reads DECH. Residues 400–567 enclose the Helicase C-terminal domain; sequence NKFSVLINVL…TSNDMFDCLE (168 aa). The region spanning 585-675 is the Dicer dsRNA-binding fold domain; sequence SVSLLHCYCD…LPGPGSRKNK (91 aa). One can recognise a PAZ domain in the interval 856–978; sequence DVSVHASYSS…LPPELCSLKV (123 aa). 2 RNase III domains span residues 1010-1173 and 1214-1358; these read DVML…VEGG and IAGL…LDSG. Mg(2+)-binding residues include Glu-1252, Asp-1344, and Glu-1347. The DRBM 1 domain occupies 1384–1451; the sequence is NPMRELRELC…AQETLSKLKN (68 aa). The segment at 1525–1556 is disordered; sequence GSGKHDVNNGRNNQPKLATQSGRLPSEATEKS. Residues 1533–1547 are compositionally biased toward polar residues; the sequence is NGRNNQPKLATQSGR. The DRBM 2 domain maps to 1569–1645; it reads TARSFLFELC…AQGALWCLKQ (77 aa).

The protein belongs to the helicase family. Dicer subfamily. As to quaternary structure, may interact with ARGONAUTE1 or PINHEAD through their common PAZ domains. Requires Mg(2+) as cofactor. The cofactor is Mn(2+). As to expression, expressed in roots, leaf blades, leaf sheaths, shoot apices and spikelets.

Its subcellular location is the nucleus. In terms of biological role, involved in the RNA silencing pathway. Cleaves double-stranded RNA to produce small interfering RNAs (siRNAs) which target the selective destruction of complementary RNAs. Required for the production of 21 nucleotide siRNAs. Regulates shoot apical meristem (SAM) initiation and maintenance, leaf polarization and lemma polarity through the trans-acting siRNAS (ta-siRNAs) pathway, which probably modulate the expression of the ARF2, ARF3, ARF4, ARF14 and ARF15 genes. Can process endogenous 21 nucleotide siRNAs derived from an imperfect inverted repeat. May not be involved in microRNAs (miRNAs) production. The protein is Endoribonuclease Dicer homolog 4 (DCL4) of Oryza sativa subsp. japonica (Rice).